The sequence spans 840 residues: Protein argonaute-2 (840 aa).

The region spanning 210–329 is the PAZ domain; sequence PVIEFVCEVL…LPLEVCNIVA (120 aa). Phosphoserine is present on S368. The Piwi domain occupies 498–799; the sequence is LVVVILPGKT…VAFRARYHLV (302 aa). A divalent metal cation contacts are provided by D578 and D650. P681 is subject to 4-hydroxyproline. H788 lines the a divalent metal cation pocket. Residues S805, S809, S812, and S815 each carry the phosphoserine modification.

The protein belongs to the argonaute family. Ago subfamily. Interacts with DICER1 through its Piwi domain and with TARBP2 during assembly of the RNA-induced silencing complex (RISC). Together, DICER1, AGO2 and TARBP2 constitute the trimeric RISC loading complex (RLC), or micro-RNA (miRNA) loading complex (miRLC). Within the RLC/miRLC, DICER1 and TARBP2 are required to process precursor miRNAs (pre-miRNAs) to mature miRNAs and then load them onto AGO2. AGO2 bound to the mature miRNA constitutes the minimal RISC and may subsequently dissociate from DICER1 and TARBP2. Note however that the term RISC has also been used to describe the trimeric RLC/miRLC. The formation of RISC complexes containing siRNAs rather than miRNAs appears to occur independently of DICER1. Interacts with AGO1. Also interacts with DDB1, DDX5, DDX6, DDX20, DHX30, DHX36, DDX47, DHX9, ELAVL, FXR1, GEMIN4, HNRNPF, IGF2BP1, ILF3, IMP8, MATR3, PABPC1, PRMT5, P4HA1, P4HB, RBM4, SART3, TNRC6A, TNRC6B, UPF1 and YBX1. Interacts with the P-body components DCP1A and XRN1. Associates with polysomes and messenger ribonucleoproteins (mNRPs). Interacts with RBM4; the interaction is modulated under stress-induced conditions, occurs under both cell proliferation and differentiation conditions and in an RNA- and phosphorylation-independent manner. Interacts with LIMD1, WTIP and AJUBA. Interacts with TRIM71; the interaction increases in presence of RNA. Interacts with APOBEC3G in an RNA-dependent manner. Interacts with APOBEC3A, APOBEC3C, APOBEC3F and APOBEC3H. Interacts with DICER1, TARBP2, EIF6, MOV10 and RPL7A (60S ribosome subunit); they form a large RNA-induced silencing complex (RISC). Interacts with FMR1. Interacts with ZFP36. Interacts with RC3H1; the interaction is RNA independent. Found in a complex composed of AGO2, CHD7 and ARB2A. Interacts with SND1 and SYT11. Interacts with CLNK. Interacts with GARRE1. Post-translationally, hydroxylated. 4-hydroxylation appears to enhance protein stability but is not required for miRNA-binding or endonuclease activity. In terms of processing, ubiquitinated on surface-exposed lysines by a SCF-like E3 ubiquitin-protein ligase complex containing ZSWIM8 during target-directed microRNA degradation (TDMD), a process that mediates degradation of microRNAs (miRNAs). Ubiquitination by the SCF-like E3 ubiquitin-protein ligase complex containing ZSWIM8 leads to its subsequent degradation, thereby exposing miRNAs for degradation. ZSWIM8 recognizes and binds AGO2 when it is engaged with a TDMD target. Phosphorylation at Ser-368 by AKT3; leads to up-regulate translational repression of microRNA target and down-regulate endonucleolytic cleavage. Post-translationally, a phosphorylation cycle of C-terminal serine cluster (Ser-805-Ser-815) regulates the release of target mRNAs. Target-binding leads to phosphorylation of these residues by CSNK1A1, which reduces the affinity of AGO2 for mRNA and enables target release. The ANKRD52-PPP6C phosphatase complex dephosphorylates the residues, which primes AGO2 for binding a new target.

Its subcellular location is the cytoplasm. It localises to the P-body. The protein localises to the nucleus. It catalyses the reaction Endonucleolytic cleavage to 5'-phosphomonoester.. Functionally, required for RNA-mediated gene silencing (RNAi) by the RNA-induced silencing complex (RISC). The 'minimal RISC' appears to include AGO2 bound to a short guide RNA such as a microRNA (miRNA) or short interfering RNA (siRNA). These guide RNAs direct RISC to complementary mRNAs that are targets for RISC-mediated gene silencing. The precise mechanism of gene silencing depends on the degree of complementarity between the miRNA or siRNA and its target. Binding of RISC to a perfectly complementary mRNA generally results in silencing due to endonucleolytic cleavage of the mRNA specifically by AGO2. Binding of RISC to a partially complementary mRNA results in silencing through inhibition of translation, and this is independent of endonuclease activity. May inhibit translation initiation by binding to the 7-methylguanosine cap, thereby preventing the recruitment of the translation initiation factor eIF4-E. May also inhibit translation initiation via interaction with EIF6, which itself binds to the 60S ribosomal subunit and prevents its association with the 40S ribosomal subunit. The inhibition of translational initiation leads to the accumulation of the affected mRNA in cytoplasmic processing bodies (P-bodies), where mRNA degradation may subsequently occur. In some cases RISC-mediated translational repression is also observed for miRNAs that perfectly match the 3' untranslated region (3'-UTR). Can also up-regulate the translation of specific mRNAs under certain growth conditions. Binds to the AU element of the 3'-UTR of the TNF (TNF-alpha) mRNA and up-regulates translation under conditions of serum starvation. Also required for transcriptional gene silencing (TGS), in which short RNAs known as antigene RNAs or agRNAs direct the transcriptional repression of complementary promoter regions. The polypeptide is Protein argonaute-2 (AGO2) (Oryctolagus cuniculus (Rabbit)).